The primary structure comprises 150 residues: Endoribonuclease YbeY (150 aa).

Residues His-113, His-117, and His-123 each contribute to the Zn(2+) site.

This sequence belongs to the endoribonuclease YbeY family. The cofactor is Zn(2+).

It is found in the cytoplasm. Its function is as follows. Single strand-specific metallo-endoribonuclease involved in late-stage 70S ribosome quality control and in maturation of the 3' terminus of the 16S rRNA. The chain is Endoribonuclease YbeY from Malacoplasma penetrans (strain HF-2) (Mycoplasma penetrans).